We begin with the raw amino-acid sequence, 478 residues long: Transcription factor PIF1 (478 aa).

A Phosphothreonine; by CK2 modification is found at threonine 10. 5 disordered regions span residues 56 to 80 (LHTKKPSSSPPKLLPSMDPQQQPSS), 122 to 144 (VSQVTAARPPVSSTNESRPPVRN), 172 to 210 (VRESTQVSPSATPSAAASESGLTRRTDGTDSSAVAGGGA), 230 to 294 (TSSS…LSER), and 391 to 478 (TQTH…HTTG). Residues 69 to 80 (LPSMDPQQQPSS) show a composition bias toward low complexity. Low complexity predominate over residues 179–189 (SPSATPSAAAS). Residue threonine 197 is modified to Phosphothreonine; by CK2. The residue at position 202 (serine 202) is a Phosphoserine; by CK2. Composition is skewed to basic and acidic residues over residues 238-272 (SEIEPEKTNVDDRKRKEREATTTDETESRSEETKQ) and 284-294 (RAAEVHNLSER). Residues 284–333 (RAAEVHNLSERKRRDRINERMKALQELIPRCNKSDKASMLDEAIEYMKSL) enclose the bHLH domain. The span at 415 to 426 (PNQQYDPTSGQP) shows a compositional bias: polar residues. 4 positions are modified to phosphoserine; by CK2: serine 464, serine 465, serine 466, and serine 469. The segment covering 465-478 (SSKESEDHGNHTTG) has biased composition (basic and acidic residues).

As to quaternary structure, homodimer. Interacts with the photoactivated conformer (Pfr) of phytochromes A and B, PHYA and PHYB. Also interacts with APRR1/TOC1. Binds to RGL2, RGA and FHY3 (via N-terminus). Associates to PTAC12/HMR/PAP5 which acts as a transcriptional coactivator. Binds directly to PCH1 and PCHL; this interaction facilitates its association with phyB and its subsequent light-induced degradation. In terms of processing, phosphorylated at Thr-10, Thr-197, Ser-202, Ser-464, Ser-465, Ser-466 and Ser-469 by CK2. Phosphorylated and ubiquitinated after an exposure to light (especially red and far-red), in a phytochrome-dependent manner. Modified proteins undergo a proteasome-dependent degradation. Its stability and degradation plays a central role in photomorphogenesis of seedlings. As to expression, mainly expressed in leaves, stems and seedlings, and, to a lower extent, in fruits, flowers and roots.

The protein localises to the nucleus. Its activity is regulated as follows. DNA-binding ability is inhibited by PCH1 and PCHL to negatively regulate the expressions of its target genes. Its function is as follows. Transcription activator. Negatively regulates chlorophyll biosynthesis and seed germination in the dark, and lightinduced degradation of PIF1 relieves this negative regulation to promote photomorphogenesis. Binds to the G-box motif (5'-CACGTG-3') found in many light-regulated promoters. Promotes the expression of SOM, and thus modulates responses to abscisic acid (ABA) and gibberellic acid (GA). This is Transcription factor PIF1 from Arabidopsis thaliana (Mouse-ear cress).